A 270-amino-acid polypeptide reads, in one-letter code: tRNA pseudouridine synthase A (270 aa).

Aspartate 51 (nucleophile) is an active-site residue. Tyrosine 109 is a binding site for substrate.

The protein belongs to the tRNA pseudouridine synthase TruA family. Homodimer.

The catalysed reaction is uridine(38/39/40) in tRNA = pseudouridine(38/39/40) in tRNA. Formation of pseudouridine at positions 38, 39 and 40 in the anticodon stem and loop of transfer RNAs. This Burkholderia multivorans (strain ATCC 17616 / 249) protein is tRNA pseudouridine synthase A.